Consider the following 402-residue polypeptide: Tryptophan synthase beta chain (402 aa).

Position 88 is an N6-(pyridoxal phosphate)lysine (Lys-88).

The protein belongs to the TrpB family. As to quaternary structure, tetramer of two alpha and two beta chains. Pyridoxal 5'-phosphate serves as cofactor.

The catalysed reaction is (1S,2R)-1-C-(indol-3-yl)glycerol 3-phosphate + L-serine = D-glyceraldehyde 3-phosphate + L-tryptophan + H2O. The protein operates within amino-acid biosynthesis; L-tryptophan biosynthesis; L-tryptophan from chorismate: step 5/5. In terms of biological role, the beta subunit is responsible for the synthesis of L-tryptophan from indole and L-serine. This Pasteurella multocida (strain Pm70) protein is Tryptophan synthase beta chain (trpB).